Consider the following 809-residue polypeptide: Acyl-homoserine lactone acylase QuiP (809 aa).

Residues 1–26 (MASPAFSHFLPRFGVAAAVASALSLA) form the signal peptide. The Nucleophile role is filled by Ser-261.

This sequence belongs to the peptidase S45 family. Heterodimer of an alpha subunit and a beta subunit processed from the same precursor.

It localises to the periplasm. The catalysed reaction is an N-acyl-L-homoserine lactone + H2O = L-homoserine lactone + a carboxylate. Functionally, catalyzes the deacylation of acyl-homoserine lactone (AHL or acyl-HSL), releasing homoserine lactone (HSL) and the corresponding fatty acid. Possesses a specificity for the degradation of long-chain acyl-HSLs (side chains of seven or more carbons in length). The chain is Acyl-homoserine lactone acylase QuiP (quiP) from Pseudomonas fluorescens (strain ATCC BAA-477 / NRRL B-23932 / Pf-5).